The primary structure comprises 378 residues: 1-acyl-sn-glycerol-3-phosphate acyltransferase delta (378 aa).

Residues 11 to 31 (FLCHLVFCYVFIASGLIINTI) form a helical membrane-spanning segment. The short motif at 96 to 101 (HKFEID) is the HXXXXD motif element. The next 3 membrane-spanning stretches (helical) occupy residues 125 to 145 (ELAY…VFCS), 307 to 327 (TLVN…QFLV), and 338 to 358 (LASF…MIGV).

Belongs to the 1-acyl-sn-glycerol-3-phosphate acyltransferase family. Widely expressed with highest levels in skeletal muscle, followed by heart, liver, prostate and thymus.

Its subcellular location is the endoplasmic reticulum membrane. It carries out the reaction a 1-acyl-sn-glycero-3-phosphate + an acyl-CoA = a 1,2-diacyl-sn-glycero-3-phosphate + CoA. It catalyses the reaction (4Z,7Z,10Z,13Z,16Z,19Z)-docosahexaenoyl-CoA + 1-hexadecanoyl-sn-glycero-3-phosphate = 1-hexadecanoyl-2-(4Z,7Z,10Z,13Z,16Z,19Z-docosahexaenoyl)-sn-glycero-3-phosphate + CoA. The enzyme catalyses 1-octadecanoyl-sn-glycero-3-phosphate + (9Z,12Z)-octadecadienoyl-CoA = 1-octadecanoyl-2-(9Z,12Z-octadecadienoyl)-sn-glycero-3-phosphate + CoA. The catalysed reaction is 1-octadecanoyl-sn-glycero-3-phosphate + (4Z,7Z,10Z,13Z,16Z,19Z)-docosahexaenoyl-CoA = 1-octadecanoyl-2-(4Z,7Z,10Z,13Z,16Z,19Z-docosahexaenoyl)-sn-glycero-3-phosphate + CoA. It carries out the reaction (4Z,7Z,10Z,13Z,16Z,19Z)-docosahexaenoyl-CoA + 1-(9Z-octadecenoyl)-sn-glycero-3-phosphate = 1-(9Z-octadecenoyl)-2-(4Z,7Z,10Z,13Z,16Z,19Z-docosahexaenoyl)-sn-glycero-3-phosphate + CoA. It functions in the pathway phospholipid metabolism; CDP-diacylglycerol biosynthesis; CDP-diacylglycerol from sn-glycerol 3-phosphate: step 2/3. Functionally, converts 1-acyl-sn-glycerol-3-phosphate (lysophosphatidic acid or LPA) into 1,2-diacyl-sn-glycerol-3-phosphate (phosphatidic acid or PA) by incorporating an acyl moiety at the sn-2 position of the glycerol backbone. Exhibits high acyl-CoA specificity for polyunsaturated fatty acyl-CoA, especially docosahexaenoyl-CoA (22:6-CoA, DHA-CoA). In Homo sapiens (Human), this protein is 1-acyl-sn-glycerol-3-phosphate acyltransferase delta (AGPAT4).